We begin with the raw amino-acid sequence, 251 residues long: Tropomyosin-2 (251 aa).

Residues 1 to 251 are a coiled coil; sequence MSGEEKLGKL…DTVADEPDDE (251 aa).

It belongs to the tropomyosin family. Homodimer. As to expression, striated muscle specific.

The protein is Tropomyosin-2 (TPM2) of Podocoryna carnea (Hydrozoan).